The sequence spans 49 residues: SPbeta prophage-derived uncharacterized protein YorN (49 aa).

The sequence is that of SPbeta prophage-derived uncharacterized protein YorN (yorN) from Bacillus subtilis (strain 168).